We begin with the raw amino-acid sequence, 102 residues long: ATP-dependent Clp protease adapter protein ClpS (102 aa).

This sequence belongs to the ClpS family. As to quaternary structure, binds to the N-terminal domain of the chaperone ClpA.

Involved in the modulation of the specificity of the ClpAP-mediated ATP-dependent protein degradation. The protein is ATP-dependent Clp protease adapter protein ClpS of Shewanella amazonensis (strain ATCC BAA-1098 / SB2B).